The sequence spans 511 residues: MEKFEGYSEKHKSRQQYFVYPLLFQEYIYAFAHDYGLNGSEPVEIVSCNNKKFSSLLVKRLIIRMYQQNFLDNSVNHPNQDRLLDYKNYFYSEFYSQILSEGFAIVVEIPFSLRELSCPKEKEIPKFQNLRSIHSIFPFLEDKFLHLDYLSHIEIPYPIHLEILVQLLQYRIQDVPSLHLLRFFLNYYSNWNSFITSMKSILFLQKENKRLVKFLYNSYVSEYEFFLLFLRKQSSCLPLASSGTFLERIHFSRKMEHFGIMYPGFSRKTLWFFMDPLMHYVRYQGKAILASKGSFFLKKKWKCYLINFWQYYFFFWTQPRRIHINQLANSCFDFMGYLSSVPKSPLLVRNQMLENSFLIDTRMKKFDTIVPATLLIGYLSKAQFCTGSGHPISKPIWTDLSDWDILDRFGRICRNLFHYHSGSSKKRTLYRLKYILRLSCARTLARKHKSTVRTFMQRLGSAFLEEFFTEEEQVFSLMFTKTTLFSFCGSHTERIWYLDIIRINDLVNPLN.

It belongs to the intron maturase 2 family. MatK subfamily.

It localises to the plastid. The protein resides in the chloroplast. Usually encoded in the trnK tRNA gene intron. Probably assists in splicing its own and other chloroplast group II introns. This Hordeum secalinum (Meadow barley) protein is Maturase K.